Consider the following 361-residue polypeptide: tRNA-specific 2-thiouridylase MnmA (361 aa).

Residues 11 to 18 (GMSGGVDS) and methionine 37 contribute to the ATP site. The interaction with target base in tRNA stretch occupies residues 97 to 99 (NPD). Residue cysteine 102 is the Nucleophile of the active site. The cysteines at positions 102 and 199 are disulfide-linked. Residue glycine 126 coordinates ATP. Residues 149–151 (KDQ) form an interaction with tRNA region. The active-site Cysteine persulfide intermediate is the cysteine 199. Residues 311–312 (RY) are interaction with tRNA.

Belongs to the MnmA/TRMU family.

Its subcellular location is the cytoplasm. It catalyses the reaction S-sulfanyl-L-cysteinyl-[protein] + uridine(34) in tRNA + AH2 + ATP = 2-thiouridine(34) in tRNA + L-cysteinyl-[protein] + A + AMP + diphosphate + H(+). Functionally, catalyzes the 2-thiolation of uridine at the wobble position (U34) of tRNA, leading to the formation of s(2)U34. The protein is tRNA-specific 2-thiouridylase MnmA of Cupriavidus taiwanensis (strain DSM 17343 / BCRC 17206 / CCUG 44338 / CIP 107171 / LMG 19424 / R1) (Ralstonia taiwanensis (strain LMG 19424)).